Here is a 226-residue protein sequence, read N- to C-terminus: Lysoplasmalogenase TMEM86B (226 aa).

Residues 1 to 23 (MDPGKEGLPRKPRFSAQQLHVGK) lie on the Cytoplasmic side of the membrane. Residues 24 to 40 (WLSPFFFTCAVYFLLWI) form a helical membrane-spanning segment. Residues 41 to 46 (PDDQPS) are Extracellular-facing. Residues 47–64 (WVGALVKCLPVLSLVVFL) traverse the membrane as a helical segment. Topologically, residues 65–76 (RAVDAGGGYSAR) are cytoplasmic. A helical membrane pass occupies residues 77 to 93 (LQGALLCSAVGDACLVW). At 94–99 (PEAFLH) the chain is on the extracellular side. The chain crosses the membrane as a helical span at residues 100–117 (GVAAFAAAHLLYLWAFGL). The Cytoplasmic portion of the chain corresponds to 118 to 123 (TPLQPG). Residues 124 to 140 (LLLLVILAALPYYGLLL) traverse the membrane as a helical segment. Residues 141–146 (WHLPPD) are Extracellular-facing. A helical membrane pass occupies residues 147-163 (LVLALTAYSLALATMLW). Topologically, residues 164–171 (RGLARGGS) are cytoplasmic. Residues 172 to 188 (TGWGALLFTLSDTTLAW) traverse the membrane as a helical segment. The Extracellular portion of the chain corresponds to 189 to 199 (NAFAQPLPHAR). A helical transmembrane segment spans residues 200–217 (LVVMTTYYSAQVLISLSV). The Cytoplasmic segment spans residues 218-226 (SQSPKLKPN).

The protein belongs to the TMEM86 family. In terms of assembly, homodimer.

The protein resides in the endoplasmic reticulum membrane. The protein localises to the cytoplasm. The catalysed reaction is a 1-O-(1Z-alkenyl)-sn-glycero-3-phosphocholine + H2O = a 2,3-saturated aldehyde + sn-glycerol 3-phosphocholine. It catalyses the reaction a 1-O-(1Z-alkenyl)-sn-glycero-3-phosphoethanolamine + H2O = a 2,3-saturated aldehyde + sn-glycero-3-phosphoethanolamine. Competitively inhibited by lysophosphatidic acid. Catalyzes the hydrolysis of the vinyl ether bond of choline or ethanolamine lysoplasmalogens, forming fatty aldehyde and glycerophosphocholine or glycerophosphoethanolamine, respectively and is specific for the sn-2-deacylated (lyso) form of plasmalogen. This Sus scrofa (Pig) protein is Lysoplasmalogenase TMEM86B (TMEM86B).